Consider the following 236-residue polypeptide: Probable pseudouridine-5'-phosphatase YKL033W-A (236 aa).

It belongs to the HAD-like hydrolase superfamily.

The catalysed reaction is XMP + H2O = xanthosine + phosphate. The enzyme catalyses psi-UMP + H2O = pseudouridine + phosphate. In terms of biological role, nucleotidase with XMP as the best in vitro substrate. Low catalytic efficiencies of YKL033W-A observed with XMP and other substrates suggest that these could be secondary activities for this protein, and its primary substrate is not yet identified. May possess pseudouridine 5'-phosphatase activity and together with dTTP/UTP pyrophosphatase YOR111W might constitute a pathway for the detoxification of pseudouridine 5'-triphosphate (Psi-UTP) and -monophosphate (Psi-UMP). This Saccharomyces cerevisiae (strain ATCC 204508 / S288c) (Baker's yeast) protein is Probable pseudouridine-5'-phosphatase YKL033W-A.